The sequence spans 169 residues: Chorion protein E1 (169 aa).

The N-terminal stretch at methionine 1–alanine 19 is a signal peptide. Tetradecapeptide repeat units follow at residues glycine 114–serine 127 and glycine 128–serine 141. A disordered region spans residues alanine 119 to serine 169. The span at threonine 142–alanine 152 shows a compositional bias: polar residues.

Its function is as follows. This protein is one of two components of the prominent 'filler' that helps mold the shape of aeropyle crowns. The polypeptide is Chorion protein E1 (Antheraea polyphemus (Polyphemus moth)).